Here is a 105-residue protein sequence, read N- to C-terminus: Large ribosomal subunit protein bL21 (105 aa).

The protein belongs to the bacterial ribosomal protein bL21 family. Part of the 50S ribosomal subunit. Contacts protein L20.

This protein binds to 23S rRNA in the presence of protein L20. The polypeptide is Large ribosomal subunit protein bL21 (Porphyromonas gingivalis (strain ATCC BAA-308 / W83)).